A 591-amino-acid polypeptide reads, in one-letter code: Aspartate--tRNA ligase (591 aa).

E176 is a binding site for L-aspartate. Residues 200-203 are aspartate; that stretch reads QILK. R222 is an L-aspartate binding site. ATP-binding positions include 222-224 and Q231; that span reads RDE. L-aspartate is bound at residue H450. ATP is bound at residue E484. Position 491 (R491) interacts with L-aspartate. 536 to 539 is an ATP binding site; that stretch reads GLDR.

This sequence belongs to the class-II aminoacyl-tRNA synthetase family. Type 1 subfamily. As to quaternary structure, homodimer.

The protein localises to the cytoplasm. It catalyses the reaction tRNA(Asp) + L-aspartate + ATP = L-aspartyl-tRNA(Asp) + AMP + diphosphate. Its function is as follows. Catalyzes the attachment of L-aspartate to tRNA(Asp) in a two-step reaction: L-aspartate is first activated by ATP to form Asp-AMP and then transferred to the acceptor end of tRNA(Asp). This chain is Aspartate--tRNA ligase, found in Listeria monocytogenes serotype 4b (strain F2365).